A 244-amino-acid chain; its full sequence is Centromere protein H (244 aa).

An N-acetylmethionine modification is found at methionine 1. Residues 1–33 (METQSEEQAVTKPADSGGEGGPPQVAGAQAARP) form a disordered region. At serine 16 the chain carries Phosphoserine. A compositionally biased stretch (low complexity) spans 22–31 (PPQVAGAQAA). Lysine 64 participates in a covalent cross-link: Glycyl lysine isopeptide (Lys-Gly) (interchain with G-Cter in SUMO2). Threonine 65 is subject to Phosphothreonine. Coiled coils occupy residues 66–104 (PEQI…DRMQ) and 146–189 (DLEE…MENS).

This sequence belongs to the CENP-H/MCM16 family. Self-associates. Component of the CENPA-NAC complex, at least composed of CENPA, CENPC, CENPH, CENPM, CENPN, CENPT and CENPU. The CENPA-NAC complex interacts with the CENPA-CAD complex, composed of CENPI, CENPK, CENPL, CENPO, CENPP, CENPQ, CENPR and CENPS. Interacts with KIF2C and NDC80.

It localises to the nucleus. The protein resides in the chromosome. Its subcellular location is the centromere. It is found in the kinetochore. In terms of biological role, component of the CENPA-NAC (nucleosome-associated) complex, a complex that plays a central role in assembly of kinetochore proteins, mitotic progression and chromosome segregation. The CENPA-NAC complex recruits the CENPA-CAD (nucleosome distal) complex and may be involved in incorporation of newly synthesized CENPA into centromeres. In Bos taurus (Bovine), this protein is Centromere protein H (CENPH).